The following is a 1040-amino-acid chain: Multidrug resistance protein MdtB (1040 aa).

11 consecutive transmembrane segments (helical) span residues 15-37, 343-365, 369-391, 398-420, 440-462, 474-496, 535-557, 867-889, 909-931, 968-990, and 1000-1022; these read LFIL…GIIG, VQFE…LRNA, LIPS…FLGF, LMAL…ENIA, IGFT…LFMG, VTLA…MMCA, HPWL…YIWI, VWLI…ESFI, LMMA…IGIV, ILMT…GVGA, and MVGG…YLLF.

The protein belongs to the resistance-nodulation-cell division (RND) (TC 2.A.6) family. MdtB subfamily. In terms of assembly, part of a tripartite efflux system composed of MdtA, MdtB and MdtC. MdtB forms a heteromultimer with MdtC.

It localises to the cell inner membrane. The sequence is that of Multidrug resistance protein MdtB from Pectobacterium atrosepticum (strain SCRI 1043 / ATCC BAA-672) (Erwinia carotovora subsp. atroseptica).